We begin with the raw amino-acid sequence, 449 residues long: Chromosomal replication initiator protein DnaA (449 aa).

The tract at residues 1–83 (MDDSLWSACL…VELEIGSPPT (83 aa)) is domain I, interacts with DnaA modulators. A disordered region spans residues 77–114 (EIGSPPTPDQREAATGATRAAPAQRSSEPRQRPVDSNL). The segment at 83–112 (TPDQREAATGATRAAPAQRSSEPRQRPVDS) is domain II. Residues 89-99 (AATGATRAAPA) show a composition bias toward low complexity. The segment at 113-329 (NLNPGFTFDS…GALRRITANA (217 aa)) is domain III, AAA+ region. The ATP site is built by Gly157, Gly159, Lys160, and Thr161. The interval 330–449 (QFTGRAIDVD…YDNLLRTLST (120 aa)) is domain IV, binds dsDNA.

It belongs to the DnaA family. Oligomerizes as a right-handed, spiral filament on DNA at oriC.

The protein localises to the cytoplasm. In terms of biological role, plays an essential role in the initiation and regulation of chromosomal replication. ATP-DnaA binds to the origin of replication (oriC) to initiate formation of the DNA replication initiation complex once per cell cycle. Binds the DnaA box (a 9 base pair repeat at the origin) and separates the double-stranded (ds)DNA. Forms a right-handed helical filament on oriC DNA; dsDNA binds to the exterior of the filament while single-stranded (ss)DNA is stabiized in the filament's interior. The ATP-DnaA-oriC complex binds and stabilizes one strand of the AT-rich DNA unwinding element (DUE), permitting loading of DNA polymerase. After initiation quickly degrades to an ADP-DnaA complex that is not apt for DNA replication. Binds acidic phospholipids. The chain is Chromosomal replication initiator protein DnaA from Halorhodospira halophila (strain DSM 244 / SL1) (Ectothiorhodospira halophila (strain DSM 244 / SL1)).